Reading from the N-terminus, the 555-residue chain is Glucose-6-phosphate isomerase (555 aa).

D-glucose 6-phosphate contacts are provided by residues Gly169 to Ser170, Ser219 to Thr224, Gln364, Glu368, His399, and Lys521. Catalysis depends on Glu368, which acts as the Proton donor. Active-site residues include His399 and Lys521.

This sequence belongs to the GPI family. As to quaternary structure, homodimer.

It localises to the cytoplasm. It is found in the cytosol. The enzyme catalyses alpha-D-glucose 6-phosphate = beta-D-fructose 6-phosphate. The protein operates within carbohydrate degradation; glycolysis; D-glyceraldehyde 3-phosphate and glycerone phosphate from D-glucose: step 2/4. Its function is as follows. In the cytoplasm, catalyzes the conversion of glucose-6-phosphate to fructose-6-phosphate, the second step in glycolysis, and the reverse reaction during gluconeogenesis. This chain is Glucose-6-phosphate isomerase (PGI1), found in Candida glabrata (strain ATCC 2001 / BCRC 20586 / JCM 3761 / NBRC 0622 / NRRL Y-65 / CBS 138) (Yeast).